A 379-amino-acid polypeptide reads, in one-letter code: Protein FAM53B (379 aa).

Disordered stretches follow at residues 206–257 (CPAE…HKQR) and 302–348 (AQND…AGKE). Polar residues predominate over residues 212 to 236 (SPESTPELQRRSGQSGLARSRSQPC). A compositionally biased stretch (basic residues) spans 239-249 (NHQKIGVKRRR). The short motif at 246–249 (KRRR) is the Nuclear localization signal element. A compositionally biased stretch (polar residues) spans 326-342 (QSDSSSADALIHQSESS).

The protein belongs to the FAM53 family. Interacts with ctnnb1. In terms of tissue distribution, mainly expressed in proliferating tissues.

It localises to the nucleus. In terms of biological role, acts as a regulator of Wnt signaling pathway by regulating beta-catenin (ctnnb1) nuclear localization. Required for appendage regeneration by regulating cell proliferation. The polypeptide is Protein FAM53B (Danio rerio (Zebrafish)).